A 103-amino-acid chain; its full sequence is Integration host factor subunit alpha (103 aa).

Residues 55–74 are disordered; the sequence is CREKPQRPGRNPKTGEEMPI.

This sequence belongs to the bacterial histone-like protein family. Heterodimer of an alpha and a beta chain.

Functionally, this protein is one of the two subunits of integration host factor, a specific DNA-binding protein that functions in genetic recombination as well as in transcriptional and translational control. In Thiobacillus denitrificans (strain ATCC 25259 / T1), this protein is Integration host factor subunit alpha.